A 240-amino-acid polypeptide reads, in one-letter code: Octanoyltransferase (240 aa).

Residues 31–216 form the BPL/LPL catalytic domain; sequence GQVGDTLLLL…HLCAVFDLEP (186 aa). Residues 76-83, 145-147, and 159-161 contribute to the substrate site; these read RGGGATYH, AIG, and GLA. C177 acts as the Acyl-thioester intermediate in catalysis.

It belongs to the LipB family.

The protein resides in the cytoplasm. It carries out the reaction octanoyl-[ACP] + L-lysyl-[protein] = N(6)-octanoyl-L-lysyl-[protein] + holo-[ACP] + H(+). Its pathway is protein modification; protein lipoylation via endogenous pathway; protein N(6)-(lipoyl)lysine from octanoyl-[acyl-carrier-protein]: step 1/2. Functionally, catalyzes the transfer of endogenously produced octanoic acid from octanoyl-acyl-carrier-protein onto the lipoyl domains of lipoate-dependent enzymes. Lipoyl-ACP can also act as a substrate although octanoyl-ACP is likely to be the physiological substrate. In Roseiflexus sp. (strain RS-1), this protein is Octanoyltransferase.